A 174-amino-acid polypeptide reads, in one-letter code: Negative modulator of initiation of replication (174 aa).

Belongs to the SeqA family. Homodimer. Polymerizes to form helical filaments.

It is found in the cytoplasm. Its function is as follows. Negative regulator of replication initiation, which contributes to regulation of DNA replication and ensures that replication initiation occurs exactly once per chromosome per cell cycle. Binds to pairs of hemimethylated GATC sequences in the oriC region, thus preventing assembly of replication proteins and re-initiation at newly replicated origins. Repression is relieved when the region becomes fully methylated. The protein is Negative modulator of initiation of replication of Pseudoalteromonas atlantica (strain T6c / ATCC BAA-1087).